Here is a 499-residue protein sequence, read N- to C-terminus: MLLVLLILAASCRSALPREPTIQCGSETGPSPEWMVQHTLTPGDLRDLQVELVKTSVAAEEFSILMNISWILRADASIRLLKATKICVSGKNNMNSYSCVRCNYTEAFQSQTRPSGGKWTFSYVGFPVELSTLYLISAHNIPNANMNEDSPSLSVNFTSPGCLNHVMKYKKQCTEAGSLWDPDITACKKNEKMVEVNFTTNPLGNRYTILIQRDTTLGFSRVLENKLMRTSVAIPVTEESEGAVVQLTPYLHTCGNDCIRREGTVVLCSETSAPIPPDDNRRMLGGWLPLFLVLLVAVWVLAAGIYLTWRQGRSTKTSFPISTMLLPLIKVLVVYPSEICFHHTVCRFTDFLQNYCRSEVILEKWQKKKIAEMGPVQWLTTQKQAADKVVFLLPSDVPTLCDSACGHNEGSARENSQDLFPLAFNLFCSDFSSQTHLHKYLVVYLGGADLKGDYNALSVCPQYHLMKDATAFHTELLKATQSMSVKKRSQACHDSCSPL.

An N-terminal signal peptide occupies residues 1 to 17 (MLLVLLILAASCRSALP). The Extracellular portion of the chain corresponds to 18–286 (REPTIQCGSE…PDDNRRMLGG (269 aa)). N-linked (GlcNAc...) asparagine glycans are attached at residues asparagine 67, asparagine 103, asparagine 156, and asparagine 197. A helical membrane pass occupies residues 287 to 307 (WLPLFLVLLVAVWVLAAGIYL). Residues 308–499 (TWRQGRSTKT…QACHDSCSPL (192 aa)) are Cytoplasmic-facing. In terms of domain architecture, SEFIR spans 328–474 (LIKVLVVYPS…LMKDATAFHT (147 aa)).

As to quaternary structure, interacts with DAZAP2. Interacts with TRAF3IP2. As to expression, liver and testis. Expressed at lower level in kidney and lung. Expressed in selected T-cell, B-cell and myeloid cell lines.

It localises to the cell membrane. The protein localises to the secreted. Its function is as follows. Receptor for the pro-inflammatory cytokines IL17B and IL17E. May play a role in controlling the growth and/or differentiation of hematopoietic cells. The protein is Interleukin-17 receptor B (Il17rb) of Mus musculus (Mouse).